The following is a 428-amino-acid chain: Dihydroorotase (428 aa).

Zn(2+)-binding residues include His59 and His61. Residues 61-63 (HLR) and Asn93 contribute to the substrate site. Asp151, His178, and His231 together coordinate Zn(2+). Residue Asn277 coordinates substrate. A Zn(2+)-binding site is contributed by Asp304. The active site involves Asp304. Residues His308 and 322–323 (FG) each bind substrate.

This sequence belongs to the metallo-dependent hydrolases superfamily. DHOase family. Class I DHOase subfamily. Zn(2+) is required as a cofactor.

The enzyme catalyses (S)-dihydroorotate + H2O = N-carbamoyl-L-aspartate + H(+). It participates in pyrimidine metabolism; UMP biosynthesis via de novo pathway; (S)-dihydroorotate from bicarbonate: step 3/3. Catalyzes the reversible cyclization of carbamoyl aspartate to dihydroorotate. The chain is Dihydroorotase from Bacillus cereus (strain ATCC 14579 / DSM 31 / CCUG 7414 / JCM 2152 / NBRC 15305 / NCIMB 9373 / NCTC 2599 / NRRL B-3711).